A 600-amino-acid chain; its full sequence is Baculoviral IAP repeat-containing protein 3 (600 aa).

The BIR 1 repeat unit spans residues 27–94 (ELYRLSTYSA…RKLYPSCNFV (68 aa)). Position 138 is a phosphoserine (S138). BIR repeat units lie at residues 167 to 233 (EKAR…CPFL) and 253 to 320 (HAAR…CEYL). C290, C293, H310, and C317 together coordinate Zn(2+). The 90-residue stretch at 436–525 (EESDDLALIR…ALYRDIFVQQ (90 aa)) folds into the CARD domain. An RING-type zinc finger spans residues 553–588 (CKVCMDREVSIVFIPCGHLVVCKDCAPSLRKCPICR).

It belongs to the IAP family. In terms of assembly, interacts with PRSS25; the interaction inhibits apoptotic suppressor activity. The BIR motifs region interacts with TNF receptor associated factors 1 and 2 (TRAF1 and TRAF2) to form a heteromeric complex, which is then recruited to the tumor necrosis factor receptor 2 (TNFR2). Interaction with TRAF2 is required for ubiquitination of IKBKE, degradation of NFKBIA and activation of NF-kappa-B. Interacts with RIP1, RIP2, RIP3, RIP4 and USP19. Post-translationally, auto-ubiquitinated and degraded by the proteasome in apoptotic cells.

The protein localises to the cytoplasm. It localises to the nucleus. The enzyme catalyses S-ubiquitinyl-[E2 ubiquitin-conjugating enzyme]-L-cysteine + [acceptor protein]-L-lysine = [E2 ubiquitin-conjugating enzyme]-L-cysteine + N(6)-ubiquitinyl-[acceptor protein]-L-lysine.. USP19 regulates the stability of BIRC3/c-IAP2 by preventing its ubiquitination. Multi-functional protein which regulates not only caspases and apoptosis, but also modulates inflammatory signaling and immunity, mitogenic kinase signaling and cell proliferation, as well as cell invasion and metastasis. Acts as an E3 ubiquitin-protein ligase regulating NF-kappa-B signaling and regulates both canonical and non-canonical NF-kappa-B signaling by acting in opposite directions: acts as a positive regulator of the canonical pathway and suppresses constitutive activation of non-canonical NF-kappa-B signaling. The target proteins for its E3 ubiquitin-protein ligase activity include: RIPK1, RIPK2, RIPK3, RIPK4, CASP3, CASP7, CASP8, IKBKE, TRAF1, and BCL10. Acts as an important regulator of innate immune signaling via regulation of Toll-like receptors (TLRs), Nodlike receptors (NLRs) and RIG-I like receptors (RLRs), collectively referred to as pattern recognition receptors (PRRs). Protects cells from spontaneous formation of the ripoptosome, a large multi-protein complex that has the capability to kill cancer cells in a caspase-dependent and caspase-independent manner. Suppresses ripoptosome formation by ubiquitinating RIPK1 and CASP8. This chain is Baculoviral IAP repeat-containing protein 3 (Birc3), found in Mus musculus (Mouse).